Reading from the N-terminus, the 244-residue chain is Large ribosomal subunit protein uL30A (244 aa).

A disordered region spans residues 1-26; the sequence is MAAEKILTPESQLKKSKAQQKTAEQV.

The protein belongs to the universal ribosomal protein uL30 family. In terms of assembly, component of the large ribosomal subunit (LSU). Mature yeast ribosomes consist of a small (40S) and a large (60S) subunit. The 40S small subunit contains 1 molecule of ribosomal RNA (18S rRNA) and 33 different proteins (encoded by 57 genes). The large 60S subunit contains 3 rRNA molecules (25S, 5.8S and 5S rRNA) and 46 different proteins (encoded by 81 genes).

It is found in the cytoplasm. Functionally, component of the ribosome, a large ribonucleoprotein complex responsible for the synthesis of proteins in the cell. The small ribosomal subunit (SSU) binds messenger RNAs (mRNAs) and translates the encoded message by selecting cognate aminoacyl-transfer RNA (tRNA) molecules. The large subunit (LSU) contains the ribosomal catalytic site termed the peptidyl transferase center (PTC), which catalyzes the formation of peptide bonds, thereby polymerizing the amino acids delivered by tRNAs into a polypeptide chain. The nascent polypeptides leave the ribosome through a tunnel in the LSU and interact with protein factors that function in enzymatic processing, targeting, and the membrane insertion of nascent chains at the exit of the ribosomal tunnel. This is Large ribosomal subunit protein uL30A from Saccharomyces cerevisiae (strain ATCC 204508 / S288c) (Baker's yeast).